Here is a 332-residue protein sequence, read N- to C-terminus: UDP-3-O-acylglucosamine N-acyltransferase (332 aa).

His231 serves as the catalytic Proton acceptor.

Belongs to the transferase hexapeptide repeat family. LpxD subfamily. Homotrimer.

The enzyme catalyses a UDP-3-O-[(3R)-3-hydroxyacyl]-alpha-D-glucosamine + a (3R)-hydroxyacyl-[ACP] = a UDP-2-N,3-O-bis[(3R)-3-hydroxyacyl]-alpha-D-glucosamine + holo-[ACP] + H(+). Its pathway is bacterial outer membrane biogenesis; LPS lipid A biosynthesis. In terms of biological role, catalyzes the N-acylation of UDP-3-O-acylglucosamine using 3-hydroxyacyl-ACP as the acyl donor. Is involved in the biosynthesis of lipid A, a phosphorylated glycolipid that anchors the lipopolysaccharide to the outer membrane of the cell. The polypeptide is UDP-3-O-acylglucosamine N-acyltransferase (Ruthia magnifica subsp. Calyptogena magnifica).